The sequence spans 286 residues: Mycolic acid methyltransferase MmaA1 (286 aa).

S-adenosyl-L-methionine-binding positions include tyrosine 32–threonine 33, glycine 71–glycine 73, threonine 93–histidine 98, and tryptophan 122–glutamate 123. Cysteine 268 is an active-site residue.

This sequence belongs to the CFA/CMAS family.

It functions in the pathway lipid metabolism; mycolic acid biosynthesis. In terms of biological role, involved in the conversion of a cis-olefin into a trans-olefin with concomitant introduction of an allylic methyl branch at the proximal position of the precursor to both the methoxy and ketomycolic acids. It directly affects the cis- to trans ratio and indirectly affects the keto to methoxy ratio. The protein is Mycolic acid methyltransferase MmaA1 (cmaD) of Mycobacterium bovis (strain ATCC BAA-935 / AF2122/97).